A 207-amino-acid chain; its full sequence is Intraflagellar transport protein 43 homolog A (207 aa).

Residues 1 to 104 form a disordered region; it reads MDDNLQLGDS…GSDDEGDIPV (104 aa).

It belongs to the IFT43 family. As to quaternary structure, component of IFT complex A.

Its function is as follows. Component of IFT complex A (IFT-A) involved in retrograde ciliary transport along microtubules from the ciliary tip to the base. The polypeptide is Intraflagellar transport protein 43 homolog A (ift43a) (Salmo salar (Atlantic salmon)).